The sequence spans 305 residues: Tyrosine recombinase XerC (305 aa).

Residues 4-95 (ISIQELIKQW…TVKNFYKFLE (92 aa)) form the Core-binding (CB) domain. In terms of domain architecture, Tyr recombinase spans 116–298 (LLPKALSVDD…SIKHLEAVYN (183 aa)). Residues Arg-159, Lys-182, His-250, Arg-253, and His-276 contribute to the active site. Tyr-285 functions as the O-(3'-phospho-DNA)-tyrosine intermediate in the catalytic mechanism.

This sequence belongs to the 'phage' integrase family. XerC subfamily. In terms of assembly, forms a cyclic heterotetrameric complex composed of two molecules of XerC and two molecules of XerD.

It localises to the cytoplasm. Its function is as follows. Site-specific tyrosine recombinase, which acts by catalyzing the cutting and rejoining of the recombining DNA molecules. The XerC-XerD complex is essential to convert dimers of the bacterial chromosome into monomers to permit their segregation at cell division. It also contributes to the segregational stability of plasmids. The sequence is that of Tyrosine recombinase XerC from Rickettsia typhi (strain ATCC VR-144 / Wilmington).